The sequence spans 149 residues: uncharacterized protein (149 aa).

To Rhizobium NGR234A y4oM.

This is an uncharacterized protein from Sinorhizobium fredii (strain NBRC 101917 / NGR234).